The following is a 343-amino-acid chain: MIKLTSLVKAAGUAAKLGPAGLEDALSGILGKGDDPNLLVGPETADDAGVYRIGEGLALVDTVDIITPLVDDPFTFGRIAAANALSDVYAMGGRPVTAMNLAFFPACTLPGQILADIMAGGLDAVREAGACLVGGHTVEDHELKYGLSVTGLISPGRIVRNSTARPGDRLILTKPLGTGIVSTAIKADMVAPGVVDEAIRWMALLNASAAGLMLECEASACTDVTGFGLLGHACEMARGAGVTLEIALDAVPLMGGVEDLVADGLVPAGCYRNRDHYTPLVSVSAGAGGRLIPLFDPQTSGGLLITLSPQFADSFLSMARDRGLFAVAVGGVLPPREHAVVIA.

The active site involves selenocysteine 13. Position 13 (selenocysteine 13) is a non-standard amino acid, selenocysteine. Residues lysine 16 and 44 to 46 each bind ATP; that span reads TAD. Aspartate 47 lines the Mg(2+) pocket. Residues aspartate 64, aspartate 87, and 135–137 contribute to the ATP site; that span reads GHT. Aspartate 87 contacts Mg(2+). Aspartate 223 contacts Mg(2+).

Belongs to the selenophosphate synthase 1 family. Class I subfamily. In terms of assembly, homodimer. Mg(2+) is required as a cofactor.

It catalyses the reaction hydrogenselenide + ATP + H2O = selenophosphate + AMP + phosphate + 2 H(+). Functionally, synthesizes selenophosphate from selenide and ATP. The chain is Selenide, water dikinase from Geobacter metallireducens (strain ATCC 53774 / DSM 7210 / GS-15).